A 389-amino-acid polypeptide reads, in one-letter code: Succinate--CoA ligase [ADP-forming] subunit beta (389 aa).

The ATP-grasp domain occupies 9–244 (KQLFAEYGLP…PSQEDEREAH (236 aa)). ATP-binding positions include Lys-46, 53-55 (GRG), Glu-99, Thr-102, and Glu-107. 2 residues coordinate Mg(2+): Asn-199 and Asp-213. Residues Asn-264 and 321–323 (GIV) contribute to the substrate site.

Belongs to the succinate/malate CoA ligase beta subunit family. In terms of assembly, heterotetramer of two alpha and two beta subunits. Mg(2+) is required as a cofactor.

It carries out the reaction succinate + ATP + CoA = succinyl-CoA + ADP + phosphate. It catalyses the reaction GTP + succinate + CoA = succinyl-CoA + GDP + phosphate. The protein operates within carbohydrate metabolism; tricarboxylic acid cycle; succinate from succinyl-CoA (ligase route): step 1/1. Succinyl-CoA synthetase functions in the citric acid cycle (TCA), coupling the hydrolysis of succinyl-CoA to the synthesis of either ATP or GTP and thus represents the only step of substrate-level phosphorylation in the TCA. The beta subunit provides nucleotide specificity of the enzyme and binds the substrate succinate, while the binding sites for coenzyme A and phosphate are found in the alpha subunit. The sequence is that of Succinate--CoA ligase [ADP-forming] subunit beta from Teredinibacter turnerae (strain ATCC 39867 / T7901).